The primary structure comprises 293 residues: Acetyl-coenzyme A carboxylase carboxyl transferase subunit beta (293 aa).

The CoA carboxyltransferase N-terminal domain maps to 29–293; that stretch reads LWSKCPECGQ…GCKPMELTSA (265 aa). Zn(2+) contacts are provided by cysteine 33, cysteine 36, cysteine 52, and cysteine 55. Residues 33-55 form a C4-type zinc finger; sequence CPECGQVVYLKDLKLNASVCANC.

Belongs to the AccD/PCCB family. In terms of assembly, acetyl-CoA carboxylase is a heterohexamer composed of biotin carboxyl carrier protein (AccB), biotin carboxylase (AccC) and two subunits each of ACCase subunit alpha (AccA) and ACCase subunit beta (AccD). Requires Zn(2+) as cofactor.

It localises to the cytoplasm. The catalysed reaction is N(6)-carboxybiotinyl-L-lysyl-[protein] + acetyl-CoA = N(6)-biotinyl-L-lysyl-[protein] + malonyl-CoA. It participates in lipid metabolism; malonyl-CoA biosynthesis; malonyl-CoA from acetyl-CoA: step 1/1. Functionally, component of the acetyl coenzyme A carboxylase (ACC) complex. Biotin carboxylase (BC) catalyzes the carboxylation of biotin on its carrier protein (BCCP) and then the CO(2) group is transferred by the transcarboxylase to acetyl-CoA to form malonyl-CoA. The polypeptide is Acetyl-coenzyme A carboxylase carboxyl transferase subunit beta (Synechococcus sp. (strain CC9605)).